The following is a 3412-amino-acid chain: Genome polyprotein (3412 aa).

Residues Met-1–Glu-104 are Cytoplasmic-facing. The segment at Pro-38–Leu-72 is hydrophobic; homodimerization of capsid protein C. Positions Ser-102–Gly-121 are cleaved as a propeptide — ER anchor for the capsid protein C, removed in mature form by serine protease NS3. Residues Met-105–Val-125 traverse the membrane as a helical segment. Over Arg-126 to Arg-244 the chain is Extracellular. N-linked (GlcNAc...) asparagine; by host glycans are attached at residues Asn-134 and Asn-150. A helical transmembrane segment spans residues Trp-245–Asn-265. Residues Asn-266 to Arg-270 are Cytoplasmic-facing. A helical membrane pass occupies residues Val-271–Ser-285. At Ala-286–Leu-730 the chain is on the extracellular side. Cystine bridges form between Cys-288–Cys-315, Cys-345–Cys-401, Cys-345–Cys-406, Cys-359–Cys-390, Cys-377–Cys-401, Cys-377–Cys-406, Cys-467–Cys-568, and Cys-585–Cys-615. The interval Asp-383 to Gly-396 is fusion peptide. A helical transmembrane segment spans residues Phe-731–Ile-751. Residues Asn-752–Thr-757 are Extracellular-facing. The chain crosses the membrane as a helical span at residues Met-758 to Ala-778. At Asp-779–Glu-1132 the chain is on the extracellular side. 6 disulfides stabilise this stretch: Cys-782-Cys-793, Cys-833-Cys-921, Cys-957-Cys-1002, Cys-1058-Cys-1107, Cys-1069-Cys-1091, and Cys-1090-Cys-1094. N-linked (GlcNAc...) asparagine; by host glycans are attached at residues Asn-908 and Asn-986. The helical transmembrane segment at Val-1133 to Arg-1153 threads the bilayer. Topologically, residues Arg-1154–Ala-1201 are cytoplasmic. The helical transmembrane segment at Met-1202–Leu-1222 threads the bilayer. Residues Arg-1223 to Pro-1287 are Lumenal-facing. A helical transmembrane segment spans residues Met-1288 to Val-1308. Residues Leu-1309–Ser-1355 lie on the Cytoplasmic side of the membrane. The helical transmembrane segment at Ile-1356–Phe-1376 threads the bilayer. The Lumenal portion of the chain corresponds to Gln-1377–Asp-1378. Residues Met-1379–Ala-1399 form a helical membrane-spanning segment. The Cytoplasmic segment spans residues Gly-1400–Leu-1456. An interacts with and activates NS3 protease region spans residues Leu-1407–Val-1446. Positions Ala-1457 to Leu-1477 form an intramembrane region, helical. At His-1478 to Ala-2157 the chain is on the cytoplasmic side. Positions Ser-1485 to Leu-1665 constitute a Peptidase S7 domain. Active-site charge relay system; for serine protease NS3 activity residues include His-1537, Asp-1561, and Ser-1622. Residues Pro-1669–Gln-1825 enclose the Helicase ATP-binding domain. Positions Lys-1673–Met-1676 are important for RNA-binding. Residue Phe-1682–Thr-1689 coordinates ATP. Residues Asp-1773–His-1776 carry the DEAH box motif. The region spanning Gly-1836 to Tyr-1997 is the Helicase C-terminal domain. An N6-acetyllysine; by host modification is found at Lys-1877. Positions Ala-1942–Ser-1963 are disordered. The chain crosses the membrane as a helical span at residues Met-2158–Phe-2178. Residues Met-2179–Arg-2186 are Lumenal-facing. The helical intramembrane region spans Met-2187–Lys-2207. Topologically, residues Pro-2208–Thr-2209 are lumenal. A helical membrane pass occupies residues His-2210–Gly-2230. Over Gln-2231–Ala-2241 the chain is Cytoplasmic. Residues Tyr-2242 to Leu-2262 traverse the membrane as a helical segment. The Lumenal portion of the chain corresponds to Glu-2263 to Pro-2293. Residues Gly-2294–Trp-2314 constitute an intramembrane region (helical). Over Ile-2315–Ser-2360 the chain is Lumenal. The helical transmembrane segment at Ile-2361 to Ile-2380 threads the bilayer. Residues Leu-2381–Pro-2421 lie on the Cytoplasmic side of the membrane. A helical membrane pass occupies residues Ala-2422–Ala-2442. The Lumenal portion of the chain corresponds to Met-2443–Arg-2445. Residues Thr-2446–Glu-2466 traverse the membrane as a helical segment. Over Gly-2467–Leu-3411 the chain is Cytoplasmic. The 265-residue stretch at Gly-2508 to Ser-2772 folds into the mRNA cap 0-1 NS5-type MT domain. Residue Ser-2563 participates in S-adenosyl-L-methionine binding. Phosphoserine is present on Ser-2563. The active-site For 2'-O-MTase activity is Lys-2568. Residues Gly-2593, Trp-2594, Thr-2611, Leu-2612, Asp-2638, and Val-2639 each coordinate S-adenosyl-L-methionine. Asp-2653 functions as the For 2'-O-MTase activity in the catalytic mechanism. Ile-2654 provides a ligand contact to S-adenosyl-L-methionine. Active-site for 2'-O-MTase activity residues include Lys-2689 and Glu-2725. Tyr-2727 is an S-adenosyl-L-methionine binding site. The Nuclear localization signal signature appears at Arg-2879–Arg-2912. Zn(2+) contacts are provided by Glu-2946, His-2950, Cys-2955, and Cys-2958. One can recognise a RdRp catalytic domain in the interval Gly-3036–Ala-3188. Positions 3223, 3239, and 3358 each coordinate Zn(2+).

It in the N-terminal section; belongs to the class I-like SAM-binding methyltransferase superfamily. mRNA cap 0-1 NS5-type methyltransferase family. As to quaternary structure, homodimer. Interacts (via N-terminus) with host EXOC1 (via C-terminus); this interaction results in EXOC1 degradation through the proteasome degradation pathway. In terms of assembly, forms heterodimers with envelope protein E in the endoplasmic reticulum and Golgi. Homodimer; in the endoplasmic reticulum and Golgi. Interacts with protein prM. Interacts with non-structural protein 1. As to quaternary structure, homodimer; Homohexamer when secreted. Interacts with envelope protein E. In terms of assembly, interacts (via N-terminus) with serine protease NS3. Forms a heterodimer with serine protease NS3. May form homooligomers. As to quaternary structure, forms a heterodimer with NS2B. Interacts with non-structural protein 2A (via N-terminus). Interacts with NS4B. Interacts with unphosphorylated RNA-directed RNA polymerase NS5; this interaction stimulates RNA-directed RNA polymerase NS5 guanylyltransferase activity. NS3 interacts with host PDCD6IP; this interaction contributes to virion release. In terms of assembly, interacts with serine protease NS3. Homodimer. Interacts with host STAT2; this interaction prevents the establishment of cellular antiviral state. Interacts with serine protease NS3. Interacts with host TRIM23; this interaction leads to NS5 ubiquitination. Specific enzymatic cleavages in vivo yield mature proteins. The nascent capsid protein C contains a C-terminal hydrophobic domain that act as a signal sequence for translocation of prM into the lumen of the ER. Mature capsid protein C is cleaved at a site upstream of this hydrophobic domain by NS3. prM is cleaved in post-Golgi vesicles by a host furin, releasing the mature small envelope protein M, and peptide pr. Non-structural protein 2A-alpha, a C-terminally truncated form of non-structural protein 2A, results from partial cleavage by NS3. Specific enzymatic cleavages in vivo yield mature proteins peptide 2K acts as a signal sequence and is removed from the N-terminus of NS4B by the host signal peptidase in the ER lumen. Signal cleavage at the 2K-4B site requires a prior NS3 protease-mediated cleavage at the 4A-2K site. In terms of processing, cleaved in post-Golgi vesicles by a host furin, releasing the mature small envelope protein M, and peptide pr. This cleavage is incomplete as up to 30% of viral particles still carry uncleaved prM. Post-translationally, N-glycosylated. N-glycosylated. The excreted form is glycosylated and this is required for efficient secretion of the protein from infected cells. In terms of processing, polyubiquitinated; ubiquitination is probably mediated by host TRIM23 and is prerequisite for NS5-STAT2 interaction. NS5 is not ISGylated or sumoylated. Post-translationally, acetylated by host KAT5. Acetylation modulates NS3 RNA-binding and unwinding activities and plays an important positive role for viral replication. Phosphorylated on serines residues. This phosphorylation may trigger NS5 nuclear localization.

Its subcellular location is the virion. The protein resides in the host nucleus. It is found in the host cytoplasm. The protein localises to the host perinuclear region. It localises to the secreted. Its subcellular location is the virion membrane. The protein resides in the host endoplasmic reticulum membrane. It catalyses the reaction Selective hydrolysis of -Xaa-Xaa-|-Yaa- bonds in which each of the Xaa can be either Arg or Lys and Yaa can be either Ser or Ala.. It carries out the reaction RNA(n) + a ribonucleoside 5'-triphosphate = RNA(n+1) + diphosphate. The catalysed reaction is a ribonucleoside 5'-triphosphate + H2O = a ribonucleoside 5'-diphosphate + phosphate + H(+). The enzyme catalyses ATP + H2O = ADP + phosphate + H(+). It catalyses the reaction a 5'-end (5'-triphosphoguanosine)-ribonucleoside in mRNA + S-adenosyl-L-methionine = a 5'-end (N(7)-methyl 5'-triphosphoguanosine)-ribonucleoside in mRNA + S-adenosyl-L-homocysteine. It carries out the reaction a 5'-end (N(7)-methyl 5'-triphosphoguanosine)-ribonucleoside in mRNA + S-adenosyl-L-methionine = a 5'-end (N(7)-methyl 5'-triphosphoguanosine)-(2'-O-methyl-ribonucleoside) in mRNA + S-adenosyl-L-homocysteine + H(+). Its function is as follows. Plays a role in virus budding by binding to the cell membrane and gathering the viral RNA into a nucleocapsid that forms the core of a mature virus particle. During virus entry, may induce genome penetration into the host cytoplasm after hemifusion induced by the surface proteins. Can migrate to the cell nucleus where it modulates host functions. Functionally, inhibits RNA silencing by interfering with host Dicer. In terms of biological role, prevents premature fusion activity of envelope proteins in trans-Golgi by binding to envelope protein E at pH6.0. After virion release in extracellular space, gets dissociated from E dimers. Acts as a chaperone for envelope protein E during intracellular virion assembly by masking and inactivating envelope protein E fusion peptide. prM is the only viral peptide matured by host furin in the trans-Golgi network probably to avoid catastrophic activation of the viral fusion activity in acidic Golgi compartment prior to virion release. prM-E cleavage is inefficient, and many virions are only partially matured. These uncleaved prM would play a role in immune evasion. Its function is as follows. May play a role in virus budding. Exerts cytotoxic effects by activating a mitochondrial apoptotic pathway through M ectodomain. May display a viroporin activity. Functionally, binds to host cell surface receptor and mediates fusion between viral and cellular membranes. Envelope protein is synthesized in the endoplasmic reticulum in the form of heterodimer with protein prM. They play a role in virion budding in the ER, and the newly formed immature particle is covered with 60 spikes composed of heterodimer between precursor prM and envelope protein E. The virion is transported to the Golgi apparatus where the low pH causes dissociation of PrM-E heterodimers and formation of E homodimers. prM-E cleavage is inefficient, and many virions are only partially matured. These uncleaved prM would play a role in immune evasion. In terms of biological role, involved in immune evasion, pathogenesis and viral replication. Once cleaved off the polyprotein, is targeted to three destinations: the viral replication cycle, the plasma membrane and the extracellular compartment. Essential for viral replication. Required for formation of the replication complex and recruitment of other non-structural proteins to the ER-derived membrane structures. Excreted as a hexameric lipoparticle that plays a role against host immune response. Antagonizing the complement function. Binds to the host macrophages and dendritic cells. Inhibits signal transduction originating from Toll-like receptor 3 (TLR3). Component of the viral RNA replication complex that functions in virion assembly and antagonizes the host immune response. Its function is as follows. Required cofactor for the serine protease function of NS3. May have membrane-destabilizing activity and form viroporins. Functionally, displays three enzymatic activities: serine protease, NTPase and RNA helicase. NS3 serine protease, in association with NS2B, performs its autocleavage and cleaves the polyprotein at dibasic sites in the cytoplasm: C-prM, NS2A-NS2B, NS2B-NS3, NS3-NS4A, NS4A-2K and NS4B-NS5. NS3 RNA helicase binds RNA and unwinds dsRNA in the 3' to 5' direction. Also plays a role in virus assembly. In terms of biological role, regulates the ATPase activity of the NS3 helicase activity. NS4A allows NS3 helicase to conserve energy during unwinding. Functions as a signal peptide for NS4B and is required for the interferon antagonism activity of the latter. Its function is as follows. Induces the formation of ER-derived membrane vesicles where the viral replication takes place. Inhibits interferon (IFN)-induced host STAT1 phosphorylation and nuclear translocation, thereby preventing the establishment of cellular antiviral state by blocking the IFN-alpha/beta pathway. Functionally, replicates the viral (+) and (-) RNA genome, and performs the capping of genomes in the cytoplasm. NS5 methylates viral RNA cap at guanine N-7 and ribose 2'-O positions. Besides its role in RNA genome replication, also prevents the establishment of cellular antiviral state by blocking the interferon-alpha/beta (IFN-alpha/beta) signaling pathway. IFN-I induces binding of NS5 to host IFN-activated transcription factor STAT2, preventing its transcriptional activity. Host TRIM23 is the E3 ligase that interacts with and polyubiquitinates NS5 to promote its binding to STAT2 and trigger IFN-I signaling inhibition. In Aedes aegypti (Yellowfever mosquito), this protein is Genome polyprotein.